The sequence spans 371 residues: Signal peptide peptidase-like 1 (371 aa).

The Lumenal portion of the chain corresponds to Met-1–Lys-6. A helical transmembrane segment spans residues Leu-7–Tyr-27. At Ala-28–Gln-57 the chain is on the cytoplasmic side. The helical transmembrane segment at Ala-58 to Leu-75 threads the bilayer. Residues Phe-76–Ser-80 lie on the Lumenal side of the membrane. The helical transmembrane segment at His-81–Val-103 threads the bilayer. Topologically, residues Asn-104–Lys-123 are cytoplasmic. A helical membrane pass occupies residues Pro-124 to Ser-146. Topologically, residues Gly-147–Trp-149 are lumenal. A helical membrane pass occupies residues Leu-150 to Val-167. Over Arg-168 to Asn-171 the chain is Cytoplasmic. A helical transmembrane segment spans residues Ile-172–Phe-192. The active site involves Asp-186. The Lumenal portion of the chain corresponds to Ser-193–Tyr-258. Residues Met-259–Phe-279 form a helical membrane-spanning segment. Asp-265 is an active-site residue. Over Asp-280–Tyr-301 the chain is Cytoplasmic. Residues Val-302–Leu-322 form a helical membrane-spanning segment. Residues Ser-323 to Pro-326 are Lumenal-facing. A helical transmembrane segment spans residues Gln-327–Leu-347. A PAL motif is present at residues Pro-328–Leu-330. The Cytoplasmic segment spans residues Arg-348–Val-371.

It belongs to the peptidase A22B family.

The protein resides in the endosome membrane. Its function is as follows. Intramembrane-cleaving aspartic protease (I-CLiP) that cleaves type II membrane signal peptides in the hydrophobic plane of the membrane. In Oryza sativa subsp. japonica (Rice), this protein is Signal peptide peptidase-like 1 (SPPL1).